Reading from the N-terminus, the 156-residue chain is Large ribosomal subunit protein uL22 (156 aa).

This sequence belongs to the universal ribosomal protein uL22 family. Part of the 50S ribosomal subunit.

In terms of biological role, this protein binds specifically to 23S rRNA. It makes multiple contacts with different domains of the 23S rRNA in the assembled 50S subunit and ribosome. Its function is as follows. The globular domain of the protein is located near the polypeptide exit tunnel on the outside of the subunit, while an extended beta-hairpin is found that lines the wall of the exit tunnel in the center of the 70S ribosome. The polypeptide is Large ribosomal subunit protein uL22 (Hyperthermus butylicus (strain DSM 5456 / JCM 9403 / PLM1-5)).